The chain runs to 191 residues: Flavin prenyltransferase UbiX (191 aa).

FMN-binding positions include 13–15 (GAS), Thr39, 90–93 (TMKT), and Arg125. Residues Tyr155 and Lys171 each contribute to the dimethylallyl phosphate site.

Belongs to the UbiX/PAD1 family.

It catalyses the reaction dimethylallyl phosphate + FMNH2 = prenylated FMNH2 + phosphate. Its function is as follows. Flavin prenyltransferase that catalyzes the synthesis of the prenylated FMN cofactor (prenyl-FMN) for 4-hydroxy-3-polyprenylbenzoic acid decarboxylase UbiD. The prenyltransferase is metal-independent and links a dimethylallyl moiety from dimethylallyl monophosphate (DMAP) to the flavin N5 and C6 atoms of FMN. This is Flavin prenyltransferase UbiX from Methanothermobacter thermautotrophicus (strain ATCC 29096 / DSM 1053 / JCM 10044 / NBRC 100330 / Delta H) (Methanobacterium thermoautotrophicum).